Consider the following 857-residue polypeptide: Autoinducer 2 sensor kinase/phosphatase LuxQ (857 aa).

2 helical membrane-spanning segments follow: residues 14–34 (IASFITHAVVVVMGVLIVSVL) and 283–303 (FWMAFALISMIGVSIASRWWL). Residues 486–706 (KMSHELRTPL…RFEIQLPIEL (221 aa)) form the Histidine kinase domain. At His-489 the chain carries Phosphohistidine; by autocatalysis. A Response regulatory domain is found at 731 to 846 (RVLLVEDNHT…TLHKALEHFK (116 aa)). 4-aspartylphosphate is present on Asp-780.

Binds the complex formed by AI-2 and LuxP.

Its subcellular location is the cell inner membrane. The catalysed reaction is ATP + protein L-histidine = ADP + protein N-phospho-L-histidine.. Its function is as follows. At low cell density, in absence of AI-2 (autoinducer 2), LuxQ has a kinase activity and autophosphorylates on a histidine residue. The phosphoryl group is then transferred to an aspartate residue in the response regulator domain. The phosphoryl group is transferred to LuxU, and ultimately to LuxO. At high cell density, in the presence of AI-2, the kinase activity is inactivated, and the response regulator domain has a phosphatase activity. The protein is Autoinducer 2 sensor kinase/phosphatase LuxQ (luxQ) of Vibrio cholerae serotype O1 (strain ATCC 39315 / El Tor Inaba N16961).